The primary structure comprises 317 residues: Beta-ketoacyl-[acyl-carrier-protein] synthase III (317 aa).

Residues Cys112 and His244 contribute to the active site. The tract at residues 245–249 (QANLR) is ACP-binding. The active site involves Asn274.

It belongs to the thiolase-like superfamily. FabH family. Homodimer.

Its subcellular location is the cytoplasm. It carries out the reaction malonyl-[ACP] + acetyl-CoA + H(+) = 3-oxobutanoyl-[ACP] + CO2 + CoA. It functions in the pathway lipid metabolism; fatty acid biosynthesis. Its function is as follows. Catalyzes the condensation reaction of fatty acid synthesis by the addition to an acyl acceptor of two carbons from malonyl-ACP. Catalyzes the first condensation reaction which initiates fatty acid synthesis and may therefore play a role in governing the total rate of fatty acid production. Possesses both acetoacetyl-ACP synthase and acetyl transacylase activities. Its substrate specificity determines the biosynthesis of branched-chain and/or straight-chain of fatty acids. The sequence is that of Beta-ketoacyl-[acyl-carrier-protein] synthase III from Escherichia coli O9:H4 (strain HS).